A 43-amino-acid polypeptide reads, in one-letter code: Defensin (43 aa).

3 cysteine pairs are disulfide-bonded: Cys3-Cys34, Cys20-Cys39, and Cys24-Cys41.

It is found in the secreted. Antibacterial peptide. Affects Gram-negative bacteria including methicillin-resistant Staphylococcus aureus. The chain is Defensin from Trypoxylus dichotomus (Japanese rhinoceros beetle).